A 209-amino-acid chain; its full sequence is ATP phosphoribosyltransferase (209 aa).

This sequence belongs to the ATP phosphoribosyltransferase family. Short subfamily. In terms of assembly, heteromultimer composed of HisG and HisZ subunits.

The protein resides in the cytoplasm. It carries out the reaction 1-(5-phospho-beta-D-ribosyl)-ATP + diphosphate = 5-phospho-alpha-D-ribose 1-diphosphate + ATP. The protein operates within amino-acid biosynthesis; L-histidine biosynthesis; L-histidine from 5-phospho-alpha-D-ribose 1-diphosphate: step 1/9. Catalyzes the condensation of ATP and 5-phosphoribose 1-diphosphate to form N'-(5'-phosphoribosyl)-ATP (PR-ATP). Has a crucial role in the pathway because the rate of histidine biosynthesis seems to be controlled primarily by regulation of HisG enzymatic activity. The polypeptide is ATP phosphoribosyltransferase (Alkaliphilus metalliredigens (strain QYMF)).